We begin with the raw amino-acid sequence, 559 residues long: Formate--tetrahydrofolate ligase (559 aa).

Position 68-75 (68-75 (TPAGEGKT)) interacts with ATP.

This sequence belongs to the formate--tetrahydrofolate ligase family.

It carries out the reaction (6S)-5,6,7,8-tetrahydrofolate + formate + ATP = (6R)-10-formyltetrahydrofolate + ADP + phosphate. It functions in the pathway one-carbon metabolism; tetrahydrofolate interconversion. This Sinorhizobium fredii (strain NBRC 101917 / NGR234) protein is Formate--tetrahydrofolate ligase.